We begin with the raw amino-acid sequence, 970 residues long: Type III restriction-modification enzyme EcoP15I Res subunit (970 aa).

A helicase-like domain region spans residues 75–540; that stretch reads AKSNIIDVSM…EVGRGLRLPV (466 aa). AMP-binding residues include T91, G122, F126, and D226. Positions 894–918 are endonuclease domain; that stretch reads TYSPDFAYVVKTAEGDYLNFIIETK.

Belongs to the type III restriction-modification system Res protein family. A heterotetramer with stoichiometry Res(2)Mod(2). A heterotrimer with stoichiometry Res(1)Mod(2). Requires Mg(2+) as cofactor. The cofactor is S-adenosyl-L-methionine.

The enzyme catalyses Endonucleolytic cleavage of DNA to give specific double-stranded fragments with terminal 5'-phosphates.. Its function is as follows. A type III restriction enzyme that recognizes 2 inversely oriented double-stranded sequences 5'-CAGCAG-3' and cleaves DNA 25-27 base pairs downstream of one site. DNA restriction requires both the Res and Mod subunits. DNA topology affects its action; relaxed and negatively supercoiled DNA are digested but positively supercoiled DNA is not a good substrate. Interacts with DNA approximately one half-turn downstream of the recognition site. After binding to one recognition site undergoes random one-dimensional diffusion along DNA until it collides with a stationary enzyme bound to the second DNA site, which is when DNA cleavage occurs. This Escherichia coli protein is Type III restriction-modification enzyme EcoP15I Res subunit.